The following is a 600-amino-acid chain: tRNA uridine 5-carboxymethylaminomethyl modification enzyme MnmG (600 aa).

10–15 serves as a coordination point for FAD; that stretch reads GGGHAG. The segment at 216 to 239 is disordered; the sequence is ADPQPRGFTGTPGPRAAESPTWQT. 267–281 provides a ligand contact to NAD(+); it reads GPRYCPSIEDKVVKF.

Belongs to the MnmG family. As to quaternary structure, homodimer. Heterotetramer of two MnmE and two MnmG subunits. Requires FAD as cofactor.

Its subcellular location is the cytoplasm. Its function is as follows. NAD-binding protein involved in the addition of a carboxymethylaminomethyl (cmnm) group at the wobble position (U34) of certain tRNAs, forming tRNA-cmnm(5)s(2)U34. The sequence is that of tRNA uridine 5-carboxymethylaminomethyl modification enzyme MnmG from Deinococcus radiodurans (strain ATCC 13939 / DSM 20539 / JCM 16871 / CCUG 27074 / LMG 4051 / NBRC 15346 / NCIMB 9279 / VKM B-1422 / R1).